A 484-amino-acid chain; its full sequence is MKFKQDFFTQLPEFYSQVYPQGISNPHWLAWSDDAAALIGLHQPTDELLQGLSGNAAVEGASYYAQVYSGHQFGGYTPRLGDGRSIILGEAIGPNGAWDVALKGGGPTPYSRHGDGRAVMRSAVREFLVSEALHHLGVPTTRALAVIGSDMPVWRESQETAAITVRLARSHIRFGHFEFFSHSERGQADKLTQLLNFTLKQHYPHLSCDPAGYKAWFLQVVQDSAKMIAHWQAIGFAHGVMNTDNMSILGDSFDFGPFAFLDTFQEDFICNHSDPDGRYAFGQQPGIGLWNLQRLAQALTPVIASDDLIAALNQYQHALVQHYLALMRAKLGLVQQADSSAEQDQQDLELIGRFTVLMEKNQLDYSHTWRRFGQLDPSSLHSSLRDDFIDLNEFDAWYQVYQARLGKVTDVEAWQQQCNRVNPKYILRNYLAQEAIIAVDEGNLAQLQRLHQVLRQPFTEQIEHEELAKRPPDWGQGLIMSCSS.

Residues glycine 81, glycine 83, arginine 84, lysine 103, aspartate 115, glycine 116, arginine 166, and arginine 173 each coordinate ATP. Residue aspartate 244 is the Proton acceptor of the active site. 2 residues coordinate Mg(2+): asparagine 245 and aspartate 254. Aspartate 254 provides a ligand contact to ATP.

This sequence belongs to the SELO family. Requires Mg(2+) as cofactor. Mn(2+) is required as a cofactor.

The catalysed reaction is L-seryl-[protein] + ATP = 3-O-(5'-adenylyl)-L-seryl-[protein] + diphosphate. The enzyme catalyses L-threonyl-[protein] + ATP = 3-O-(5'-adenylyl)-L-threonyl-[protein] + diphosphate. It carries out the reaction L-tyrosyl-[protein] + ATP = O-(5'-adenylyl)-L-tyrosyl-[protein] + diphosphate. It catalyses the reaction L-histidyl-[protein] + UTP = N(tele)-(5'-uridylyl)-L-histidyl-[protein] + diphosphate. The catalysed reaction is L-seryl-[protein] + UTP = O-(5'-uridylyl)-L-seryl-[protein] + diphosphate. The enzyme catalyses L-tyrosyl-[protein] + UTP = O-(5'-uridylyl)-L-tyrosyl-[protein] + diphosphate. Nucleotidyltransferase involved in the post-translational modification of proteins. It can catalyze the addition of adenosine monophosphate (AMP) or uridine monophosphate (UMP) to a protein, resulting in modifications known as AMPylation and UMPylation. The polypeptide is Protein nucleotidyltransferase YdiU (Shewanella oneidensis (strain ATCC 700550 / JCM 31522 / CIP 106686 / LMG 19005 / NCIMB 14063 / MR-1)).